Reading from the N-terminus, the 293-residue chain is Indole-3-glycerol phosphate synthase (293 aa).

It belongs to the TrpC family.

It carries out the reaction 1-(2-carboxyphenylamino)-1-deoxy-D-ribulose 5-phosphate + H(+) = (1S,2R)-1-C-(indol-3-yl)glycerol 3-phosphate + CO2 + H2O. It participates in amino-acid biosynthesis; L-tryptophan biosynthesis; L-tryptophan from chorismate: step 4/5. The polypeptide is Indole-3-glycerol phosphate synthase (Prochlorococcus marinus (strain SARG / CCMP1375 / SS120)).